Reading from the N-terminus, the 122-residue chain is UPF0382 membrane protein SH2409 (122 aa).

Helical transmembrane passes span 3 to 23 (LFIILGALCTMMSVGTGAFGA), 46 to 66 (MYHGLGLIIIGVISGTTSINV), 69 to 89 (AGWLLFLGVVFFSGSLYILAL), and 98 to 118 (ITPIGGLLFIAGWLMLIISTF).

Belongs to the UPF0382 family.

The protein localises to the cell membrane. In Staphylococcus haemolyticus (strain JCSC1435), this protein is UPF0382 membrane protein SH2409.